The following is a 247-amino-acid chain: Probable phosphatase Shew_1420 (247 aa).

Residues H8, H10, H16, H41, E74, H102, H132, D193, and H195 each contribute to the Zn(2+) site.

This sequence belongs to the PHP family. The cofactor is Zn(2+).

The protein is Probable phosphatase Shew_1420 of Shewanella loihica (strain ATCC BAA-1088 / PV-4).